Consider the following 82-residue polypeptide: Translational regulator CsrA (82 aa).

This sequence belongs to the CsrA/RsmA family. As to quaternary structure, homodimer; the beta-strands of each monomer intercalate to form a hydrophobic core, while the alpha-helices form wings that extend away from the core.

The protein resides in the cytoplasm. Functionally, a translational regulator that binds mRNA to regulate translation initiation and/or mRNA stability. Usually binds in the 5'-UTR at or near the Shine-Dalgarno sequence preventing ribosome-binding, thus repressing translation. Its main target seems to be the major flagellin gene, while its function is anatagonized by FliW. This chain is Translational regulator CsrA, found in Geobacillus kaustophilus (strain HTA426).